The sequence spans 214 residues: Large ribosomal subunit protein bL25 (214 aa).

The disordered stretch occupies residues Thr194–Glu214. Positions Glu204–Glu214 are enriched in basic and acidic residues.

This sequence belongs to the bacterial ribosomal protein bL25 family. CTC subfamily. As to quaternary structure, part of the 50S ribosomal subunit; part of the 5S rRNA/L5/L18/L25 subcomplex. Contacts the 5S rRNA. Binds to the 5S rRNA independently of L5 and L18.

In terms of biological role, this is one of the proteins that binds to the 5S RNA in the ribosome where it forms part of the central protuberance. The chain is Large ribosomal subunit protein bL25 from Thermotoga petrophila (strain ATCC BAA-488 / DSM 13995 / JCM 10881 / RKU-1).